A 208-amino-acid polypeptide reads, in one-letter code: Small ribosomal subunit protein uS5 (208 aa).

An S5 DRBM domain is found at 28–91 (LEERLIYANR…EKAKKNVIRV (64 aa)).

It belongs to the universal ribosomal protein uS5 family. In terms of assembly, part of the 30S ribosomal subunit. Contacts proteins S4 and S8.

Its function is as follows. With S4 and S12 plays an important role in translational accuracy. Located at the back of the 30S subunit body where it stabilizes the conformation of the head with respect to the body. This chain is Small ribosomal subunit protein uS5, found in Aquifex aeolicus (strain VF5).